Consider the following 156-residue polypeptide: Arginine repressor (156 aa).

It belongs to the ArgR family.

The protein localises to the cytoplasm. It functions in the pathway amino-acid biosynthesis; L-arginine biosynthesis [regulation]. Its function is as follows. Regulates arginine biosynthesis genes. This is Arginine repressor from Vibrio cholerae serotype O1 (strain ATCC 39315 / El Tor Inaba N16961).